We begin with the raw amino-acid sequence, 2281 residues long: Protein Ycf2 (2281 aa).

1634–1641 (GSIGTGRS) is an ATP binding site.

It belongs to the Ycf2 family.

It localises to the plastid. The protein localises to the chloroplast stroma. Probable ATPase of unknown function. Its presence in a non-photosynthetic plant (Epifagus virginiana) and experiments in tobacco indicate that it has an essential function which is probably not related to photosynthesis. The sequence is that of Protein Ycf2 from Buxus microphylla (Littleleaf boxwood).